Reading from the N-terminus, the 727-residue chain is Polyphosphate kinase (727 aa).

N82 lines the ATP pocket. Mg(2+) is bound by residues R412 and R442. The active-site Phosphohistidine intermediate is H472. ATP contacts are provided by Y505, R601, and H629.

It belongs to the polyphosphate kinase 1 (PPK1) family. Mg(2+) serves as cofactor. An intermediate of this reaction is the autophosphorylated ppk in which a phosphate is covalently linked to a histidine residue through a N-P bond.

The catalysed reaction is [phosphate](n) + ATP = [phosphate](n+1) + ADP. In terms of biological role, catalyzes the reversible transfer of the terminal phosphate of ATP to form a long-chain polyphosphate (polyP). This chain is Polyphosphate kinase, found in Pseudomonas putida (strain ATCC 47054 / DSM 6125 / CFBP 8728 / NCIMB 11950 / KT2440).